The primary structure comprises 264 residues: Apolipoprotein A-I (264 aa).

An N-terminal signal peptide occupies residues 1-18 (MKAVVLALAVLFLTGSQA). 2 consecutive repeat copies span residues 67–88 (LHLLDNWDTLSNTVGRLREQLG) and 89–110 (PVTHEFWANLEKDTEWLRQEMN). Residues 67–264 (LHLLDNWDTL…DEASKKLNAQ (198 aa)) form a 10 X approximate tandem repeats region. M109 bears the Methionine sulfoxide mark. The 3; half-length repeat unit spans residues 111 to 121 (KDLEEVKVKVQ). A run of 5 repeats spans residues 122 to 143 (PYLDDFQKKWQEEVERYREKVG), 144 to 165 (PLGAELREGARQKLQELHEKLT), 166 to 187 (PLGEDLRDRARVHVDALRTQLA), 188 to 207 (PYSDQMRERLATRLAAIRDS), and 208 to 229 (PSLAVYHAKASEHLKTLSEKAK). The stretch at 230–240 (PALEDLRQGLM) is one 9; half-length repeat. Residues 241 to 264 (PVLENLKTTVLAAIDEASKKLNAQ) form repeat 10.

This sequence belongs to the apolipoprotein A1/A4/E family. In terms of assembly, homodimer. Interacts with APOA1BP and CLU. Component of a sperm activating protein complex (SPAP), consisting of APOA1, an immunoglobulin heavy chain, an immunoglobulin light chain and albumin. Interacts with NDRG1. Interacts with SCGB3A2. Interacts with NAXE and YJEFN3. Post-translationally, glycosylated. Palmitoylated. In terms of processing, phosphorylation sites are present in the extracellular medium.

It localises to the secreted. Participates in the reverse transport of cholesterol from tissues to the liver for excretion by promoting cholesterol efflux from tissues and by acting as a cofactor for the lecithin cholesterol acyltransferase (LCAT). As part of the SPAP complex, activates spermatozoa motility. The chain is Apolipoprotein A-I (APOA1) from Jaculus jaculus (Lesser Egyptian jerboa).